The primary structure comprises 144 residues: Mannitol-specific phosphotransferase enzyme IIA component (144 aa).

The region spanning 3–142 is the PTS EIIA type-2 domain; that stretch reads ELFSNDNIFL…EEIKQVFEEA (140 aa). The Tele-phosphohistidine intermediate role is filled by His-63. His-63 carries the post-translational modification Phosphohistidine; by HPr.

Homodimer or homotrimer. Seems to be a monomer when not phosphorylated.

The protein localises to the cytoplasm. The phosphoenolpyruvate-dependent sugar phosphotransferase system (sugar PTS), a major carbohydrate active transport system, catalyzes the phosphorylation of incoming sugar substrates concomitantly with their translocation across the cell membrane. The enzyme II CmtAB PTS system is involved in D-mannitol transport. The polypeptide is Mannitol-specific phosphotransferase enzyme IIA component (mtlF) (Staphylococcus aureus (strain MRSA252)).